We begin with the raw amino-acid sequence, 533 residues long: Retinoic acid receptor RXR-beta (533 aa).

Residues 1–23 (MSWAARPPFLPQRHAAGQCGPVG) form a disordered region. The modulating stretch occupies residues 1-204 (MSWAARPPFL…PGGPGAGKRL (204 aa)). Arg25 bears the Omega-N-methylarginine mark. A disordered region spans residues 36–181 (WRRRRPWLDP…GSGPPEDVKP (146 aa)). A compositionally biased stretch (low complexity) spans 46 to 61 (AAAAAAAVAGGEQQTP). The segment covering 67–82 (EAGRDGMGDSGRDSRS) has biased composition (basic and acidic residues). Composition is skewed to pro residues over residues 89 to 109 (NPLPQGVPPPSPPGPPLPPST) and 118 to 131 (APPPPPMPPPPLGS). Over residues 132-143 (PFPVISSSMGSP) the composition is skewed to low complexity. Positions 144-153 (GLPPPAPPGF) are enriched in pro residues. 2 consecutive NR C4-type zinc fingers follow at residues 205-225 (CAICGDRSSGKHYGVYSCEGC) and 241-265 (CRDNKDCTVDKRQRNRCQYCRYQKC). The nuclear receptor DNA-binding region spans 205 to 270 (CAICGDRSSG…RYQKCLATGM (66 aa)). Residues 271-295 (KREAVQEERQRGKDKDGDGEGAGGA) are hinge. A compositionally biased stretch (basic and acidic residues) spans 276-288 (QEERQRGKDKDGD). Disordered regions lie at residues 276 to 299 (QEERQRGKDKDGDGEGAGGAPEEM) and 313 to 336 (QKSDQGVEGPGGTGGSGSSPNDPV). Residues 296 to 529 (PEEMPVDRIL…TFLMEMLEAP (234 aa)) form the NR LBD domain. Residues 320 to 329 (EGPGGTGGSG) are compositionally biased toward gly residues.

It belongs to the nuclear hormone receptor family. NR2 subfamily. Homodimer (in vitro). Heterodimer with other retinoic acid receptor family members. Binds DNA preferentially as a RAR/RXR heterodimer. Interacts with NR1H3. Interacts with AKAP13. In terms of tissue distribution, expressed in aortic endothelial cells (at protein level). Expressed in monocytes. Expressed in a variety of tumor cell lines.

It is found in the nucleus. Its subcellular location is the cytoplasm. In terms of biological role, receptor for retinoic acid. Retinoic acid receptors bind as heterodimers to their target response elements in response to their ligands, all-trans or 9-cis retinoic acid, and regulate gene expression in various biological processes. The RAR/RXR heterodimers bind to the retinoic acid response elements (RARE). This Homo sapiens (Human) protein is Retinoic acid receptor RXR-beta (RXRB).